A 51-amino-acid polypeptide reads, in one-letter code: uncharacterized protein (51 aa).

The interval 1–28 (MQQPQNITTSSISNNNNNNTSLTLQQQQ) is disordered. Residues 13–47 (SNNNNNNTSLTLQQQQEQLQQLQIKRKRNLMKQLQ) are a coiled coil.

This is an uncharacterized protein from Dictyostelium discoideum (Social amoeba).